The following is a 152-amino-acid chain: Large ribosomal subunit protein eL29 (152 aa).

The segment covering 1 to 26 (MAKSKNHTTHNQSRKWHRNGIKKPRS) has biased composition (basic residues). The disordered stretch occupies residues 1–32 (MAKSKNHTTHNQSRKWHRNGIKKPRSQRYESL). An N6-methyllysine modification is found at Lys-5. At Ser-31 the chain carries Phosphoserine. Lys-33 is modified (N6-acetyllysine). The tract at residues 119 to 152 (CRPKSQAKASTKAKPPAAAAPAAKGAQAPTKAPE) is disordered. Positions 121-152 (PKSQAKASTKAKPPAAAAPAAKGAQAPTKAPE) are enriched in low complexity.

It belongs to the eukaryotic ribosomal protein eL29 family. As to quaternary structure, component of the large ribosomal subunit.

Its subcellular location is the cytoplasm. Component of the large ribosomal subunit. The ribosome is a large ribonucleoprotein complex responsible for the synthesis of proteins in the cell. The sequence is that of Large ribosomal subunit protein eL29 (RPL29) from Bos taurus (Bovine).